A 1385-amino-acid chain; its full sequence is Formin-like protein 7 (1385 aa).

The Phosphatase tensin-type domain maps to 9 to 193 (FKKPPDGLLL…RYVSMRNVVP (185 aa)). Catalysis depends on Cys-126, which acts as the Phosphocysteine intermediate. One can recognise a C2 tensin-type domain in the interval 199–358 (DRALTLDSVI…KASSTSQGNI (160 aa)). 4 disordered regions span residues 345-367 (IPQR…DGSE), 427-510 (APSR…LTVN), 649-989 (STAA…PLHW), and 1362-1385 (KRAQ…LLEP). Polar residues-rich tracts occupy residues 349 to 358 (KASSTSQGNI), 448 to 470 (TSAS…SPVQ), and 483 to 510 (PAQS…LTVN). 2 stretches are compositionally biased toward pro residues: residues 654-665 (PPLPPPLPPPLK) and 689-701 (TQPP…PPIQ). The span at 702 to 718 (PTLISNSIYSSTSSVVS) shows a compositional bias: low complexity. Composition is skewed to pro residues over residues 727 to 758 (PAPP…PPSA), 766 to 795 (PVPP…PPAA), and 802 to 815 (AVPP…PPMV). Residues 855-867 (QTSSLVSSLPSSR) show a composition bias toward low complexity. Composition is skewed to pro residues over residues 895–906 (SAPPAPPLPPPK) and 921–932 (WPPPPPPGPPPK). Positions 933 to 942 (NSSNSLPSKG) are enriched in low complexity. One can recognise an FH2 domain in the interval 974-1372 (RPNQSSKRTP…RAQMEAEKEK (399 aa)).

This sequence belongs to the formin-like family. Class-II subfamily.

The polypeptide is Formin-like protein 7 (FH7) (Oryza sativa subsp. japonica (Rice)).